A 757-amino-acid chain; its full sequence is Large ribosomal subunit protein mL102 (rPPR5) (757 aa).

The segment covering Glu-39–Asp-55 has biased composition (polar residues). Residues Glu-39–Gln-82 are disordered. Over residues Arg-70–Gln-82 the composition is skewed to basic and acidic residues. PPR repeat units lie at residues Asp-149 to Trp-183, Asp-184 to Arg-218, Thr-219 to Pro-253, Thr-254 to Pro-288, Asp-289 to Pro-323, Ser-324 to Pro-358, Asn-359 to Pro-393, Asp-395 to Ala-429, Glu-430 to Leu-464, Glu-473 to Asp-507, Ala-510 to Arg-541, Glu-542 to Pro-576, Asp-577 to Ile-611, Asn-614 to Ala-648, Asp-651 to Leu-680, and Glu-681 to Thr-715.

Belongs to the PPR family. P subfamily. As to quaternary structure, component of the mitochondrial ribosome large subunit.

It localises to the mitochondrion. In Arabidopsis thaliana (Mouse-ear cress), this protein is Large ribosomal subunit protein mL102 (rPPR5).